A 115-amino-acid polypeptide reads, in one-letter code: Large ribosomal subunit protein bL19 (115 aa).

This sequence belongs to the bacterial ribosomal protein bL19 family.

Its function is as follows. This protein is located at the 30S-50S ribosomal subunit interface and may play a role in the structure and function of the aminoacyl-tRNA binding site. This is Large ribosomal subunit protein bL19 from Streptococcus pneumoniae (strain JJA).